Consider the following 151-residue polypeptide: 3-dehydroquinate dehydratase (151 aa).

Tyrosine 24 (proton acceptor) is an active-site residue. Substrate contacts are provided by asparagine 76, histidine 82, and aspartate 89. Histidine 102 acts as the Proton donor in catalysis. Residues 103–104 (VS) and arginine 113 contribute to the substrate site.

The protein belongs to the type-II 3-dehydroquinase family. As to quaternary structure, homododecamer.

The catalysed reaction is 3-dehydroquinate = 3-dehydroshikimate + H2O. Its pathway is metabolic intermediate biosynthesis; chorismate biosynthesis; chorismate from D-erythrose 4-phosphate and phosphoenolpyruvate: step 3/7. Functionally, catalyzes a trans-dehydration via an enolate intermediate. This chain is 3-dehydroquinate dehydratase, found in Rhodopseudomonas palustris (strain HaA2).